The chain runs to 378 residues: AimR transcriptional regulator (378 aa).

Homodimer. Interacts with the viral arbitrium peptide, this interaction changes the oligomeric state of AimR from an active dimer to an inactive monomer leading to lysogeny.

Functionally, transcriptional regulator which is part of the latency-replication switch system that decides at the onset of infection whether to replicate and lyse the host or to lysogenize (latency) and keep the host viable. Activates the transcription of the aimX locus. Transcriptional activation of aimX seems to lead to the productive viral replication (lytic cycle), aimX possibly acting as a regulatory non-coding RNA. This Bacillus phage phi3T (Bacteriophage phi-3T) protein is AimR transcriptional regulator (aimR).